The sequence spans 92 residues: Alpha-defensin 25 (92 aa).

The N-terminal stretch at 1 to 19 is a signal peptide; it reads MKTLVLLSALALLAFQVQA. The propeptide occupies 20-57; it reads DPIQNRDEESKIDEQPGKEDQAVSVSFGDPEGSSLQEE. A compositionally biased stretch (basic and acidic residues) spans 24-40; it reads NRDEESKIDEQPGKEDQ. A disordered region spans residues 24-53; that stretch reads NRDEESKIDEQPGKEDQAVSVSFGDPEGSS. Cystine bridges form between C63–C92, C65–C80, and C70–C91.

This sequence belongs to the alpha-defensin family.

The protein localises to the secreted. May have microbicidal activities. The polypeptide is Alpha-defensin 25 (Defa25) (Mus musculus (Mouse)).